Reading from the N-terminus, the 116-residue chain is Large ribosomal subunit protein bL19 (116 aa).

The protein belongs to the bacterial ribosomal protein bL19 family.

Its function is as follows. This protein is located at the 30S-50S ribosomal subunit interface and may play a role in the structure and function of the aminoacyl-tRNA binding site. The polypeptide is Large ribosomal subunit protein bL19 (Pseudomonas entomophila (strain L48)).